The chain runs to 391 residues: Chaperone protein DnaJ (391 aa).

Residues 4-68 (DFYDVLGVSR…ETRQQYDQLG (65 aa)) enclose the J domain. Residues 53–79 (DVLTDEETRQQYDQLGHERFEEAEKRG) show a composition bias toward basic and acidic residues. Disordered stretches follow at residues 53–94 (DVLT…MGGA) and 117–136 (FFGG…EQGR). 2 stretches are compositionally biased toward gly residues: residues 81 to 94 (TGNG…MGGA) and 119 to 129 (GGAGGGGGRGR). The segment at 152–234 (GVSKQVTVRR…CGGQGQTRER (83 aa)) adopts a CR-type zinc-finger fold. 8 residues coordinate Zn(2+): C165, C168, C182, C185, C208, C211, C222, and C225. CXXCXGXG motif repeat units follow at residues 165–172 (CADCGGSG), 182–189 (CPQCDGQG), 208–215 (CSRCGGEG), and 222–229 (CSTCGGQG).

It belongs to the DnaJ family. Homodimer. Requires Zn(2+) as cofactor.

The protein resides in the cytoplasm. Its function is as follows. Participates actively in the response to hyperosmotic and heat shock by preventing the aggregation of stress-denatured proteins and by disaggregating proteins, also in an autonomous, DnaK-independent fashion. Unfolded proteins bind initially to DnaJ; upon interaction with the DnaJ-bound protein, DnaK hydrolyzes its bound ATP, resulting in the formation of a stable complex. GrpE releases ADP from DnaK; ATP binding to DnaK triggers the release of the substrate protein, thus completing the reaction cycle. Several rounds of ATP-dependent interactions between DnaJ, DnaK and GrpE are required for fully efficient folding. Also involved, together with DnaK and GrpE, in the DNA replication of plasmids through activation of initiation proteins. This is Chaperone protein DnaJ from Halobacterium salinarum (strain ATCC 29341 / DSM 671 / R1).